Consider the following 333-residue polypeptide: Homoserine O-succinyltransferase (333 aa).

Cys147 (acyl-thioester intermediate) is an active-site residue. Residues Lys168 and Ser196 each contribute to the substrate site. His239 serves as the catalytic Proton acceptor. Glu241 is a catalytic residue. Arg253 serves as a coordination point for substrate.

Belongs to the MetA family.

It localises to the cytoplasm. The enzyme catalyses L-homoserine + succinyl-CoA = O-succinyl-L-homoserine + CoA. It functions in the pathway amino-acid biosynthesis; L-methionine biosynthesis via de novo pathway; O-succinyl-L-homoserine from L-homoserine: step 1/1. Functionally, transfers a succinyl group from succinyl-CoA to L-homoserine, forming succinyl-L-homoserine. In Rhodopseudomonas palustris, this protein is Homoserine O-succinyltransferase.